Consider the following 161-residue polypeptide: Nucleotide-binding protein GM21_0633 (161 aa).

The protein belongs to the YajQ family.

Its function is as follows. Nucleotide-binding protein. This Geobacter sp. (strain M21) protein is Nucleotide-binding protein GM21_0633.